Consider the following 622-residue polypeptide: DNA polymerase II small subunit (622 aa).

The tract at residues I76–E113 is disordered. Residues V85 to T95 are compositionally biased toward basic and acidic residues. The span at N96–T109 shows a compositional bias: polar residues.

This sequence belongs to the DNA polymerase delta/II small subunit family. As to quaternary structure, heterodimer of a large subunit and a small subunit.

It catalyses the reaction DNA(n) + a 2'-deoxyribonucleoside 5'-triphosphate = DNA(n+1) + diphosphate. It carries out the reaction Exonucleolytic cleavage in the 3'- to 5'-direction to yield nucleoside 5'-phosphates.. Functionally, possesses two activities: a DNA synthesis (polymerase) and an exonucleolytic activity that degrades single-stranded DNA in the 3' to 5' direction. Has a template-primer preference which is characteristic of a replicative DNA polymerase. The polypeptide is DNA polymerase II small subunit (polB) (Pyrococcus horikoshii (strain ATCC 700860 / DSM 12428 / JCM 9974 / NBRC 100139 / OT-3)).